Here is a 60-residue protein sequence, read N- to C-terminus: Large ribosomal subunit protein bL32 (60 aa).

Residues 1-60 are disordered; it reads MAVQQNKKSPSKRGMHRSHDFLVNPSTAIEPTTGETHLRHHISPNGFYRGRKVLKTKADE. A compositionally biased stretch (polar residues) spans 24 to 35; it reads NPSTAIEPTTGE. The segment covering 49-60 has biased composition (basic residues); sequence RGRKVLKTKADE.

This sequence belongs to the bacterial ribosomal protein bL32 family.

The chain is Large ribosomal subunit protein bL32 from Bordetella petrii (strain ATCC BAA-461 / DSM 12804 / CCUG 43448).